The primary structure comprises 872 residues: Potassium voltage-gated channel subfamily KQT member 3 (872 aa).

A disordered region spans residues 1–43 (MGLKARRAAGAAGGGGDGGGGGGGAANPAGGDAAAAGDEERKV). Topologically, residues 1-120 (MGLKARRAAG…IYDALERPRG (120 aa)) are cytoplasmic. Residues 11–25 (AAGGGGDGGGGGGGA) show a composition bias toward gly residues. Residues 26 to 36 (ANPAGGDAAAA) are compositionally biased toward low complexity. At T81 the chain carries Phosphothreonine. A helical transmembrane segment spans residues 121–143 (WALLYHALVFLIVLGCLILAVLT). Residues 144–153 (TFKEYETVSG) lie on the Extracellular side of the membrane. The helical transmembrane segment at 154–175 (DWLLLLETFAIFIFGAEFALRI) threads the bilayer. The Cytoplasmic portion of the chain corresponds to 176-193 (WAAGCCCRYKGWRGRLKF). Residues 194-213 (ARKPLCMLDIFVLIASVPVV) form a helical membrane-spanning segment. Over 214–225 (AVGNQGNVLATS) the chain is Extracellular. A helical; Voltage-sensor transmembrane segment spans residues 226–244 (LRSLRFLQILRMLRMDRRG). R243 contacts a 1,2-diacyl-sn-glycero-3-phospho-(1D-myo-inositol-4,5-bisphosphate). Over 245 to 256 (GTWKLLGSAICA) the chain is Cytoplasmic. Position 246 is a phosphothreonine (T246). The chain crosses the membrane as a helical span at residues 257-282 (HSKELITAWYIGFLTLILSSFLVYLV). A 1,2-diacyl-sn-glycero-3-phospho-(1D-myo-inositol-4,5-bisphosphate) is bound at residue K259. At 283–302 (EKDVPEVDAQGEEMKEEFET) the chain is on the extracellular side. The pore-forming intramembrane region spans 303 to 315 (YADALWWGLITLA). The short motif at 316-321 (TIGYGD) is the Selectivity filter element. Residues 316–326 (TIGYGDKTPKT) are Extracellular-facing. The chain crosses the membrane as a helical span at residues 327–353 (WEGRLIAATFSLIGVSFFALPAGILGS). Topologically, residues 354-872 (GLALKVQEQH…SVWTPSNKPI (519 aa)) are cytoplasmic. Positions 356-537 (ALKVQEQHRQ…RLYKKKFKET (182 aa)) are mediates interaction with calmodulin. K366 contributes to the a 1,2-diacyl-sn-glycero-3-phospho-(1D-myo-inositol-4,5-bisphosphate) binding site. Disordered stretches follow at residues 575–611 (GPPS…PSTS) and 764–872 (ADLQ…NKPI). Polar residues-rich tracts occupy residues 587–600 (KGSA…QSPR) and 843–872 (DPFT…NKPI).

Belongs to the potassium channel family. KQT (TC 1.A.1.15) subfamily. Kv7.3/KCNQ3 sub-subfamily. As to quaternary structure, heterotetramer with KCNQ2; forms heterotetrameric native M-channel responsible for the M-current. Interacts with calmodulin; the interaction is calcium-independent, constitutive and participates in the proper assembly of a functional M-channel. Heteromultimer with KCNQ5. May associate with KCNE2. Interacts with IQCJ-SCHIP1. Interacts (via the pore module) with SLC5A3/SMIT1; forms a coregulatory complex that alters ion selectivity, voltage dependence and gating kinetics of the channel. In terms of processing, KCNQ2/KCNQ3 are ubiquitinated by NEDD4L. Ubiquitination leads to protein degradation. Degradation induced by NEDD4L is inhibited by USP36. As to expression, predominantly expressed in brain.

The protein localises to the cell membrane. It carries out the reaction K(+)(in) = K(+)(out). The catalysed reaction is Rb(+)(in) = Rb(+)(out). It catalyses the reaction Cs(+)(in) = Cs(+)(out). The enzyme catalyses Na(+)(in) = Na(+)(out). Phosphatidylinositol-4,5-bisphosphate (PIP2) potentiates the activation of KCNQ channels by enhancing the electro-mechanical coupling of the voltage-sensing domain (VSD) and the pore-forming domain (PD). In the closed state of the channel, PIP2 is anchored at the S2-S3 loop; upon channel activation, PIP2 interacts with the S4-S5 linker and is involved in channel gating. Calcium suppresses KCNQ2-KCNQ3 channel currents, with calcium-bound calmodulin inducing a change in channel configuration which leads to the reduction of channel affinity for PIP2 and subsequent current suppression. M-channel is activated by the anticonvulsant retigabine. Functionally, pore-forming subunit of the voltage-gated potassium (Kv) M-channel which is responsible for the M-current, a key controller of neuronal excitability. M-channel is composed of pore-forming subunits KCNQ2 and KCNQ3 assembled as heterotetramers. The native M-current has a slowly activating and deactivating potassium conductance which plays a critical role in determining the subthreshold electrical excitability of neurons as well as the responsiveness to synaptic inputs. M-channel is selectively permeable in vitro to other cations besides potassium, in decreasing order of affinity K(+) &gt; Rb(+) &gt; Cs(+) &gt; Na(+). M-channel association with SLC5A3/SMIT1 alters channel ion selectivity, increasing Na(+) and Cs(+) permeation relative to K(+). Suppressed by activation of M1 muscarinic acetylcholine receptors. KCNQ3 also associates with KCNQ5 to form a functional channel in vitro and may also contribute to the M-current in brain. The polypeptide is Potassium voltage-gated channel subfamily KQT member 3 (Homo sapiens (Human)).